A 233-amino-acid chain; its full sequence is 3-dehydroquinate dehydratase (233 aa).

Residues 39 to 41 (EIR) and R73 each bind 3-dehydroquinate. H132 (proton donor/acceptor) is an active-site residue. The Schiff-base intermediate with substrate role is filled by K159. 2 residues coordinate 3-dehydroquinate: R196 and Q219.

The protein belongs to the type-I 3-dehydroquinase family. In terms of assembly, homodimer.

The catalysed reaction is 3-dehydroquinate = 3-dehydroshikimate + H2O. It participates in metabolic intermediate biosynthesis; chorismate biosynthesis; chorismate from D-erythrose 4-phosphate and phosphoenolpyruvate: step 3/7. Its function is as follows. Involved in the third step of the chorismate pathway, which leads to the biosynthesis of aromatic amino acids. Catalyzes the cis-dehydration of 3-dehydroquinate (DHQ) and introduces the first double bond of the aromatic ring to yield 3-dehydroshikimate. This chain is 3-dehydroquinate dehydratase, found in Methanococcoides burtonii (strain DSM 6242 / NBRC 107633 / OCM 468 / ACE-M).